The sequence spans 64 residues: Large ribosomal subunit protein uL1 (64 aa).

This sequence belongs to the universal ribosomal protein uL1 family. In terms of assembly, part of the 50S ribosomal subunit.

In terms of biological role, binds directly to 23S rRNA. The L1 stalk is quite mobile in the ribosome, and is involved in E site tRNA release. Functionally, protein L1 is also a translational repressor protein, it controls the translation of the L11 operon by binding to its mRNA. In Streptomyces lavendulae, this protein is Large ribosomal subunit protein uL1 (rplA).